A 61-amino-acid chain; its full sequence is MAVPKKRTSMSKKRIRKNIWKKKTYFSIVHSYSLAKSRSFSSGNEHPKPKGFSGQQQQTNK.

The interval 37–61 is disordered; the sequence is SRSFSSGNEHPKPKGFSGQQQQTNK.

Belongs to the bacterial ribosomal protein bL32 family.

It localises to the plastid. Its subcellular location is the chloroplast. In Agrostis stolonifera (Creeping bentgrass), this protein is Large ribosomal subunit protein bL32c.